The chain runs to 549 residues: Maturase K (549 aa).

The protein belongs to the intron maturase 2 family. MatK subfamily.

It is found in the plastid. It localises to the chloroplast. Usually encoded in the trnK tRNA gene intron. Probably assists in splicing its own and other chloroplast group II introns. The sequence is that of Maturase K from Albidella oligococca (Caldesia oligococca).